The following is a 134-amino-acid chain: Large ribosomal subunit protein uL14 (134 aa).

It belongs to the universal ribosomal protein uL14 family. Part of the 50S ribosomal subunit. Forms a cluster with proteins L3 and L19. In the 70S ribosome, L14 and L19 interact and together make contacts with the 16S rRNA in bridges B5 and B8.

Binds to 23S rRNA. Forms part of two intersubunit bridges in the 70S ribosome. This chain is Large ribosomal subunit protein uL14, found in Deinococcus geothermalis (strain DSM 11300 / CIP 105573 / AG-3a).